The primary structure comprises 87 residues: uncharacterized protein (87 aa).

This sequence to H.pylori HP0495/JHP0447.

This is an uncharacterized protein from Campylobacter jejuni subsp. jejuni serotype O:2 (strain ATCC 700819 / NCTC 11168).